Reading from the N-terminus, the 148-residue chain is Meiosis inducing protein mei3 (148 aa).

Residues 1-20 (MSSQNTSNSRHPASSASALP) show a composition bias toward polar residues. Residues 1-96 (MSSQNTSNSR…AQRIEHENKE (96 aa)) are disordered. Over residues 21-46 (NRTNTARRSTSPRTSTGSSSTNTNTK) the composition is skewed to low complexity. The segment covering 75–86 (PMKRTKRVRRTP) has biased composition (basic residues).

In terms of biological role, acts as a critical meiotic inducer by binding non-covalently to protein kinase ran1/pat1 inhibiting its enzymatic activity. Inhibits ran1/pat1 by acting as a pseudosubstrate for ran1/pat1 instead of its natural substrate ste11. Inactivation of the ran1/pat1 protein kinase is both necessary and sufficient to divert a vegetative cell from mitotic division to meiotic differentiation. In Schizosaccharomyces pombe (strain 972 / ATCC 24843) (Fission yeast), this protein is Meiosis inducing protein mei3.